The chain runs to 470 residues: DNA primase large subunit (470 aa).

Cys279, Cys358, Cys376, and Cys414 together coordinate [4Fe-4S] cluster. Positions 449-470 (EEKKSAKQSNNKENENQSIDEK) are disordered.

The protein belongs to the eukaryotic-type primase large subunit family. Heterodimer of a small subunit and a large subunit. Requires [4Fe-4S] cluster as cofactor.

DNA primase is the polymerase that synthesizes small RNA primers for the Okazaki fragments made during discontinuous DNA replication. The protein is DNA primase large subunit (prim2) of Dictyostelium discoideum (Social amoeba).